The sequence spans 177 residues: AVDFGEAIWNPASSSNYSTASNQTSAVIMHTMEGSYAGSISWFQNPSAQVSAHYLIRKSDGQITQMVREYHQAWHAKNHNYYTIGIEHDGRAADAGNWSAAMVNASARLTKSICARRGVNCASAWKGPGYDTFHLVPDSVRVKGHGMLSGNENRYDPGKYFPWSNYYNLINGGGGNP.

An N-acetylmuramoyl-L-alanine amidase domain is found at 23–158 (QTSAVIMHTM…SGNENRYDPG (136 aa)). C114 and C121 are joined by a disulfide.

The protein localises to the secreted. The catalysed reaction is Hydrolyzes the link between N-acetylmuramoyl residues and L-amino acid residues in certain cell-wall glycopeptides.. Functionally, antibacterial activity against Gram-positive bacteria M.luteus, S.aureus, E.faecalis and P.acidilactici and Gram-negative bacterium E.coli. This Achromobacter lyticus protein is N-acetylmuramoyl-L-alanine amidase A (cwhA).